Reading from the N-terminus, the 120-residue chain is MIKQIGTVAVYVEDQQKAKQFWTEKVGFDIAADHPMGPEASWLEVAPKGAETRLVIYPKAMMKGSEQMKASIVFECEDIFGTYEKMKTNGVEFLGEPNQMEWGTFVQFKDEDGNVFLLKE.

A VOC domain is found at 4–120 (QIGTVAVYVE…EDGNVFLLKE (117 aa)).

This is an uncharacterized protein from Bacillus subtilis (strain 168).